The sequence spans 511 residues: Thioredoxin reductase 2, mitochondrial (511 aa).

The transit peptide at 1–21 (MAALRGAAARFRGRAPGGARG) directs the protein to the mitochondrion. An FAD-binding site is contributed by 29-58 (DLLVIGGGSGGLACAKEAAQLGKKVAVLDY). Residues Cys74 and Cys79 are joined by a disulfide bond. Position 316 is an N6-succinyllysine (Lys316). The active-site Proton acceptor is His484. Positions 509 to 510 (CU) form a cross-link, cysteinyl-selenocysteine (Cys-Sec). A non-standard amino acid (selenocysteine) is located at residue Sec510.

It belongs to the class-I pyridine nucleotide-disulfide oxidoreductase family. In terms of assembly, homodimer. The cofactor is FAD.

It localises to the mitochondrion. The catalysed reaction is [thioredoxin]-dithiol + NADP(+) = [thioredoxin]-disulfide + NADPH + H(+). Its activity is regulated as follows. Inhibited by 1-chloro-2,4-dinitrobenzene and by zinc, calcium, magnesium and Fe(2+) ions. Involved in the control of reactive oxygen species levels and the regulation of mitochondrial redox homeostasis. Maintains thioredoxin in a reduced state. May play a role in redox-regulated cell signaling. The chain is Thioredoxin reductase 2, mitochondrial (TXNRD2) from Bos taurus (Bovine).